The sequence spans 91 residues: UPF0223 protein SACOL1106 (91 aa).

Belongs to the UPF0223 family.

This is UPF0223 protein SACOL1106 from Staphylococcus aureus (strain COL).